Reading from the N-terminus, the 196-residue chain is Holliday junction branch migration complex subunit RuvA (196 aa).

Positions 1-63 are domain I; it reads MYDYIKGTLV…DDAHLLFGFH (63 aa). The segment at 64–142 is domain II; sequence TEDEKEVFLK…ELPAETTNTT (79 aa). Residues 143-146 are flexible linker; sequence ANQT. Residues 147–196 form a domain III region; that stretch reads AGNQQLDEAMEALLALGYKATELKKVKAFFEDTNETAEQYIKSALKMLMK.

The protein belongs to the RuvA family. Homotetramer. Forms an RuvA(8)-RuvB(12)-Holliday junction (HJ) complex. HJ DNA is sandwiched between 2 RuvA tetramers; dsDNA enters through RuvA and exits via RuvB. An RuvB hexamer assembles on each DNA strand where it exits the tetramer. Each RuvB hexamer is contacted by two RuvA subunits (via domain III) on 2 adjacent RuvB subunits; this complex drives branch migration. In the full resolvosome a probable DNA-RuvA(4)-RuvB(12)-RuvC(2) complex forms which resolves the HJ.

It localises to the cytoplasm. Its function is as follows. The RuvA-RuvB-RuvC complex processes Holliday junction (HJ) DNA during genetic recombination and DNA repair, while the RuvA-RuvB complex plays an important role in the rescue of blocked DNA replication forks via replication fork reversal (RFR). RuvA specifically binds to HJ cruciform DNA, conferring on it an open structure. The RuvB hexamer acts as an ATP-dependent pump, pulling dsDNA into and through the RuvAB complex. HJ branch migration allows RuvC to scan DNA until it finds its consensus sequence, where it cleaves and resolves the cruciform DNA. This chain is Holliday junction branch migration complex subunit RuvA, found in Streptococcus thermophilus (strain ATCC BAA-491 / LMD-9).